The following is a 273-amino-acid chain: Zinc finger protein 80 (273 aa).

2 consecutive C2H2-type zinc fingers follow at residues 49–71 and 77–99; these read YKCK…HQIH and YECQ…MRIH. A C2H2-type 3; atypical zinc finger spans residues 105–127; sequence CKCVECGKVFNRRSHLLCYRQIH. 4 consecutive C2H2-type zinc fingers follow at residues 133 to 155, 161 to 183, 189 to 211, and 217 to 239; these read YECS…RMTH, FGCK…MKIH, YKCG…SMTH, and YECK…TRSH.

It belongs to the krueppel C2H2-type zinc-finger protein family.

It localises to the nucleus. Functionally, may be involved in transcriptional regulation. The sequence is that of Zinc finger protein 80 (ZNF80) from Gorilla gorilla gorilla (Western lowland gorilla).